The primary structure comprises 462 residues: ATP synthase subunit beta (462 aa).

151 to 158 (GGAGVGKT) is an ATP binding site.

Belongs to the ATPase alpha/beta chains family. F-type ATPases have 2 components, CF(1) - the catalytic core - and CF(0) - the membrane proton channel. CF(1) has five subunits: alpha(3), beta(3), gamma(1), delta(1), epsilon(1). CF(0) has four main subunits: a(1), b(1), b'(1) and c(9-12).

The protein localises to the cell inner membrane. The catalysed reaction is ATP + H2O + 4 H(+)(in) = ADP + phosphate + 5 H(+)(out). Its function is as follows. Produces ATP from ADP in the presence of a proton gradient across the membrane. The catalytic sites are hosted primarily by the beta subunits. In Chlorobium phaeovibrioides (strain DSM 265 / 1930) (Prosthecochloris vibrioformis (strain DSM 265)), this protein is ATP synthase subunit beta.